The sequence spans 146 residues: Hemoglobin subunit beta-1 (146 aa).

The 145-residue stretch at 2–146 (VWTNEERSII…VVSALGKQYH (145 aa)) folds into the Globin domain. Positions 63 and 92 each coordinate heme b.

Belongs to the globin family. Hb1 is a heterotetramer of two alpha chains and two beta-1 chains. As to expression, red blood cells.

In terms of biological role, involved in oxygen transport from gills to the various peripheral tissues. The protein is Hemoglobin subunit beta-1 (hbb1) of Pseudaphritis urvillii (Congolli).